The following is a 487-amino-acid chain: GTPase Der (487 aa).

2 EngA-type G domains span residues Leu-3–Glu-167 and Leu-203–Asn-378. GTP is bound by residues Gly-9–Ser-16, Asp-56–Leu-60, and Asn-119–Glu-122. The segment covering Glu-167 to Glu-190 has biased composition (acidic residues). The interval Glu-167–Val-191 is disordered. GTP-binding positions include Gly-209–Ser-216, Asp-256–Met-260, and Asn-321–Asp-324. The KH-like domain maps to Arg-379 to Lys-465. The segment at Thr-458 to Gly-487 is disordered. The span at Tyr-468–Gly-487 shows a compositional bias: basic residues.

The protein belongs to the TRAFAC class TrmE-Era-EngA-EngB-Septin-like GTPase superfamily. EngA (Der) GTPase family. As to quaternary structure, associates with the 50S ribosomal subunit.

GTPase that plays an essential role in the late steps of ribosome biogenesis. The protein is GTPase Der of Ruegeria pomeroyi (strain ATCC 700808 / DSM 15171 / DSS-3) (Silicibacter pomeroyi).